We begin with the raw amino-acid sequence, 766 residues long: 5-methyltetrahydropteroyltriglutamate--homocysteine methyltransferase (766 aa).

5-methyltetrahydropteroyltri-L-glutamate is bound by residues 16–19 and Lys-122; that span reads RELK. L-homocysteine contacts are provided by residues 443 to 445 and Glu-496; that span reads IGS. L-methionine contacts are provided by residues 443–445 and Glu-496; that span reads IGS. Residues 527-528 and Trp-573 contribute to the 5-methyltetrahydropteroyltri-L-glutamate site; that span reads RC. Asp-611 contributes to the L-homocysteine binding site. Asp-611 is a binding site for L-methionine. 5-methyltetrahydropteroyltri-L-glutamate is bound at residue Glu-617. His-653, Cys-655, and Glu-677 together coordinate Zn(2+). Catalysis depends on His-706, which acts as the Proton donor. Cys-738 is a binding site for Zn(2+).

The protein belongs to the vitamin-B12 independent methionine synthase family. It depends on Zn(2+) as a cofactor.

It carries out the reaction 5-methyltetrahydropteroyltri-L-glutamate + L-homocysteine = tetrahydropteroyltri-L-glutamate + L-methionine. Its pathway is amino-acid biosynthesis; L-methionine biosynthesis via de novo pathway; L-methionine from L-homocysteine (MetE route): step 1/1. Functionally, catalyzes the transfer of a methyl group from 5-methyltetrahydrofolate to homocysteine resulting in methionine formation. The protein is 5-methyltetrahydropteroyltriglutamate--homocysteine methyltransferase of Pseudomonas putida (strain W619).